Reading from the N-terminus, the 473-residue chain is Photosystem II CP43 reaction center protein (473 aa).

A propeptide spanning residues 1–14 (MKTLYSLRRFYPVE) is cleaved from the precursor. An N-acetylthreonine modification is found at Thr-15. Residue Thr-15 is modified to Phosphothreonine. A run of 5 helical transmembrane segments spans residues 69–93 (LFEVAHFVPEKPMYEQGLILLPHLA), 134–155 (LLGPETLEESFPFFGYVWKDRN), 178–200 (KALYFGGVYDTWAPGGGDVRKIT), 255–275 (KPFAWARRALVWSGEAYLSYS), and 291–312 (WFNNTAYPSEFYGPTGPEASQA). A [CaMn4O5] cluster-binding site is contributed by Glu-367. A propeptide spanning residues 426-473 (LSTSHFVLGFFLFVGHLWHAGRARAAAAGFEKGIDRDFEPVLSMTPLN) is cleaved from the precursor. A helical membrane pass occupies residues 447–471 (RARAAAAGFEKGIDRDFEPVLSMTP).

The protein belongs to the PsbB/PsbC family. PsbC subfamily. In terms of assembly, PSII is composed of 1 copy each of membrane proteins PsbA, PsbB, PsbC, PsbD, PsbE, PsbF, PsbH, PsbI, PsbJ, PsbK, PsbL, PsbM, PsbT, PsbX, PsbY, PsbZ, Psb30/Ycf12, at least 3 peripheral proteins of the oxygen-evolving complex and a large number of cofactors. It forms dimeric complexes. It depends on Binds multiple chlorophylls and provides some of the ligands for the Ca-4Mn-5O cluster of the oxygen-evolving complex. It may also provide a ligand for a Cl- that is required for oxygen evolution. PSII binds additional chlorophylls, carotenoids and specific lipids. as a cofactor. Post-translationally, over time a tryptophan in the fifth lumenal loop is converted to 2-hydroxy-2,3-dihydrotryptophan, 2-oxo-2,3-dihydrotryptophan, and kynurenine by oxidizing species from the active site. This oxidation targets the protein for turnover.

It is found in the plastid. It localises to the chloroplast thylakoid membrane. Its function is as follows. One of the components of the core complex of photosystem II (PSII). It binds chlorophyll and helps catalyze the primary light-induced photochemical processes of PSII. PSII is a light-driven water:plastoquinone oxidoreductase, using light energy to abstract electrons from H(2)O, generating O(2) and a proton gradient subsequently used for ATP formation. The sequence is that of Photosystem II CP43 reaction center protein from Spinacia oleracea (Spinach).